We begin with the raw amino-acid sequence, 763 residues long: ATP-dependent RNA helicase MAK5 (763 aa).

Disordered regions lie at residues 1–35 and 87–169; these read MVNKFLAGRLKKSKGKSFKGSSSKGNSKTVKSNNN and DTKI…DNEV. Residues 18–35 are compositionally biased toward low complexity; the sequence is FKGSSSKGNSKTVKSNNN. Residues 104–114 show a composition bias toward acidic residues; that stretch reads EIDEDAPENDL. The span at 115-127 shows a compositional bias: basic and acidic residues; it reads VEFKNMDDMKDGE. Over residues 136-160 the composition is skewed to acidic residues; sequence SEAEAESEAESEEEEEKTGDDEGED. Positions 192–220 match the Q motif motif; the sequence is WTEKVGELSFTTLHGLTKLGFNKPTLIQE. Positions 223–411 constitute a Helicase ATP-binding domain; sequence IPMALKGEDI…SHASWKNMKT (189 aa). 236-243 is a binding site for ATP; that stretch reads ASTGSGKT. The DEAD box signature appears at 352–355; that stretch reads DEAD. One can recognise a Helicase C-terminal domain in the interval 450–619; the sequence is QIKESLIECA…DIIMGKKKWQ (170 aa).

It belongs to the DEAD box helicase family. DDX24/MAK5 subfamily.

The protein resides in the nucleus. It is found in the nucleolus. It catalyses the reaction ATP + H2O = ADP + phosphate + H(+). In terms of biological role, ATP-binding RNA helicase involved in the biogenesis of 60S ribosomal subunits and is required for the normal formation of 25S and 5.8S rRNAs. This Vanderwaltozyma polyspora (strain ATCC 22028 / DSM 70294 / BCRC 21397 / CBS 2163 / NBRC 10782 / NRRL Y-8283 / UCD 57-17) (Kluyveromyces polysporus) protein is ATP-dependent RNA helicase MAK5 (MAK5).